Reading from the N-terminus, the 498-residue chain is ATP synthase subunit beta, chloroplastic (498 aa).

The segment covering 1-14 has biased composition (polar residues); that stretch reads MRTNPTTSRPGVST. Residues 1–20 form a disordered region; the sequence is MRTNPTTSRPGVSTSEEKST. 172–179 is a binding site for ATP; that stretch reads GGAGVGKT.

It belongs to the ATPase alpha/beta chains family. As to quaternary structure, F-type ATPases have 2 components, CF(1) - the catalytic core - and CF(0) - the membrane proton channel. CF(1) has five subunits: alpha(3), beta(3), gamma(1), delta(1), epsilon(1). CF(0) has four main subunits: a(1), b(1), b'(1) and c(9-12).

It is found in the plastid. The protein localises to the chloroplast thylakoid membrane. It carries out the reaction ATP + H2O + 4 H(+)(in) = ADP + phosphate + 5 H(+)(out). Functionally, produces ATP from ADP in the presence of a proton gradient across the membrane. The catalytic sites are hosted primarily by the beta subunits. The sequence is that of ATP synthase subunit beta, chloroplastic from Hordeum vulgare (Barley).